The following is a 418-amino-acid chain: Glutamyl-tRNA reductase (418 aa).

Substrate-binding positions include 49-52 (TCNR), Ser107, 112-114 (EPQ), and Gln118. Residue Cys50 is the Nucleophile of the active site. NADP(+) is bound at residue 187–192 (GAGETI).

Belongs to the glutamyl-tRNA reductase family. In terms of assembly, homodimer.

The catalysed reaction is (S)-4-amino-5-oxopentanoate + tRNA(Glu) + NADP(+) = L-glutamyl-tRNA(Glu) + NADPH + H(+). Its pathway is porphyrin-containing compound metabolism; protoporphyrin-IX biosynthesis; 5-aminolevulinate from L-glutamyl-tRNA(Glu): step 1/2. Its function is as follows. Catalyzes the NADPH-dependent reduction of glutamyl-tRNA(Glu) to glutamate 1-semialdehyde (GSA). This is Glutamyl-tRNA reductase from Aeromonas salmonicida (strain A449).